The sequence spans 396 residues: Glutamyl-tRNA reductase (396 aa).

Residues 45–48 (TCNR), serine 101, 106–108 (EDQ), and glutamine 112 contribute to the substrate site. The active-site Nucleophile is the cysteine 46. Residue 177–182 (GFGDVG) participates in NADP(+) binding.

It belongs to the glutamyl-tRNA reductase family. In terms of assembly, homodimer.

The catalysed reaction is (S)-4-amino-5-oxopentanoate + tRNA(Glu) + NADP(+) = L-glutamyl-tRNA(Glu) + NADPH + H(+). It functions in the pathway porphyrin-containing compound metabolism; protoporphyrin-IX biosynthesis; 5-aminolevulinate from L-glutamyl-tRNA(Glu): step 1/2. In terms of biological role, catalyzes the NADPH-dependent reduction of glutamyl-tRNA(Glu) to glutamate 1-semialdehyde (GSA). This chain is Glutamyl-tRNA reductase, found in Clostridium acetobutylicum (strain ATCC 824 / DSM 792 / JCM 1419 / IAM 19013 / LMG 5710 / NBRC 13948 / NRRL B-527 / VKM B-1787 / 2291 / W).